Consider the following 180-residue polypeptide: Shikimate kinase (180 aa).

14-19 provides a ligand contact to ATP; sequence GAGKSC. S18 provides a ligand contact to Mg(2+). Positions 36, 60, and 82 each coordinate substrate. Residue R120 participates in ATP binding. R139 contributes to the substrate binding site.

The protein belongs to the shikimate kinase family. Monomer. The cofactor is Mg(2+).

Its subcellular location is the cytoplasm. The catalysed reaction is shikimate + ATP = 3-phosphoshikimate + ADP + H(+). It participates in metabolic intermediate biosynthesis; chorismate biosynthesis; chorismate from D-erythrose 4-phosphate and phosphoenolpyruvate: step 5/7. Functionally, catalyzes the specific phosphorylation of the 3-hydroxyl group of shikimic acid using ATP as a cosubstrate. The sequence is that of Shikimate kinase from Xanthomonas campestris pv. campestris (strain 8004).